Here is a 1095-residue protein sequence, read N- to C-terminus: DNA polymerase delta catalytic subunit (1095 aa).

A compositionally biased stretch (basic residues) spans 1–11 (MNRSGISKKRP). The segment at 1 to 37 (MNRSGISKKRPPPSNTPPPAGKHRATGDSTPSPAIGT) is disordered. The Zn(2+) site is built by C1007, C1010, C1020, and C1023. The CysA-type zinc finger occupies 1007-1023 (CVGCKVPISNGTLCASC). [4Fe-4S] cluster-binding residues include C1052, C1055, C1065, and C1070. A CysB motif motif is present at residues 1052-1070 (CQECQGSLHQDVLCTSRDC).

Belongs to the DNA polymerase type-B family. In terms of assembly, heterodimer with subunits of 125 kDa and 50 kDa. The 125 kDa subunit contains the polymerase active site and most likely the active site for the 3'-5' exonuclease activity. It depends on [4Fe-4S] cluster as a cofactor.

Its subcellular location is the nucleus. It catalyses the reaction DNA(n) + a 2'-deoxyribonucleoside 5'-triphosphate = DNA(n+1) + diphosphate. Its function is as follows. This polymerase possesses two enzymatic activities: DNA synthesis (polymerase) and an exonucleolytic activity that degrades single-stranded DNA in the 3'- to 5'-direction. The chain is DNA polymerase delta catalytic subunit (POLD1) from Arabidopsis thaliana (Mouse-ear cress).